A 231-amino-acid chain; its full sequence is Orotidine 5'-phosphate decarboxylase (231 aa).

Residues Asp9, Lys34, 62–71, Thr117, Arg179, Gln188, Gly208, and Arg209 each bind substrate; that span reads DLKLHDIPSV. Lys64 serves as the catalytic Proton donor.

It belongs to the OMP decarboxylase family. Type 1 subfamily. In terms of assembly, homodimer.

It catalyses the reaction orotidine 5'-phosphate + H(+) = UMP + CO2. It functions in the pathway pyrimidine metabolism; UMP biosynthesis via de novo pathway; UMP from orotate: step 2/2. Functionally, catalyzes the decarboxylation of orotidine 5'-monophosphate (OMP) to uridine 5'-monophosphate (UMP). The chain is Orotidine 5'-phosphate decarboxylase from Aquifex aeolicus (strain VF5).